A 273-amino-acid chain; its full sequence is 4-hydroxy-tetrahydrodipicolinate reductase (273 aa).

12–17 contacts NAD(+); sequence GAGGRM. Arg39 is a binding site for NADP(+). NAD(+) is bound by residues 102 to 104 and 126 to 129; these read GTT and AANF. His159 acts as the Proton donor/acceptor in catalysis. His160 lines the (S)-2,3,4,5-tetrahydrodipicolinate pocket. Catalysis depends on Lys163, which acts as the Proton donor. Residue 169–170 participates in (S)-2,3,4,5-tetrahydrodipicolinate binding; sequence GT.

It belongs to the DapB family. As to quaternary structure, homotetramer.

Its subcellular location is the cytoplasm. The catalysed reaction is (S)-2,3,4,5-tetrahydrodipicolinate + NAD(+) + H2O = (2S,4S)-4-hydroxy-2,3,4,5-tetrahydrodipicolinate + NADH + H(+). It carries out the reaction (S)-2,3,4,5-tetrahydrodipicolinate + NADP(+) + H2O = (2S,4S)-4-hydroxy-2,3,4,5-tetrahydrodipicolinate + NADPH + H(+). Its pathway is amino-acid biosynthesis; L-lysine biosynthesis via DAP pathway; (S)-tetrahydrodipicolinate from L-aspartate: step 4/4. Catalyzes the conversion of 4-hydroxy-tetrahydrodipicolinate (HTPA) to tetrahydrodipicolinate. The protein is 4-hydroxy-tetrahydrodipicolinate reductase of Sodalis glossinidius (strain morsitans).